The primary structure comprises 121 residues: Large ribosomal subunit protein bL19 (121 aa).

Belongs to the bacterial ribosomal protein bL19 family.

Its function is as follows. This protein is located at the 30S-50S ribosomal subunit interface and may play a role in the structure and function of the aminoacyl-tRNA binding site. In Amoebophilus asiaticus (strain 5a2), this protein is Large ribosomal subunit protein bL19.